Here is a 453-residue protein sequence, read N- to C-terminus: tRNA modification GTPase MnmE (453 aa).

Arg-22, Glu-79, and Lys-119 together coordinate (6S)-5-formyl-5,6,7,8-tetrahydrofolate. The region spanning 215–376 is the TrmE-type G domain; that stretch reads GMKVVIAGRP…LKQHLKSLMG (162 aa). A K(+)-binding site is contributed by Asn-225. GTP-binding positions include 225-230, 244-250, 269-272, and 334-337; these read NAGKSS, TEIAGTT, DTAG, and NKAD. Residue Ser-229 participates in Mg(2+) binding. K(+)-binding residues include Thr-244, Ile-246, and Thr-249. Thr-250 provides a ligand contact to Mg(2+). Residue Lys-453 coordinates (6S)-5-formyl-5,6,7,8-tetrahydrofolate.

This sequence belongs to the TRAFAC class TrmE-Era-EngA-EngB-Septin-like GTPase superfamily. TrmE GTPase family. Homodimer. Heterotetramer of two MnmE and two MnmG subunits. K(+) serves as cofactor.

The protein localises to the cytoplasm. In terms of biological role, exhibits a very high intrinsic GTPase hydrolysis rate. Involved in the addition of a carboxymethylaminomethyl (cmnm) group at the wobble position (U34) of certain tRNAs, forming tRNA-cmnm(5)s(2)U34. This chain is tRNA modification GTPase MnmE, found in Shewanella oneidensis (strain ATCC 700550 / JCM 31522 / CIP 106686 / LMG 19005 / NCIMB 14063 / MR-1).